We begin with the raw amino-acid sequence, 474 residues long: Adenosylhomocysteinase (474 aa).

T53, D135, and E197 together coordinate substrate. Residue 198 to 200 (TTT) coordinates NAD(+). Substrate contacts are provided by K227 and D231. Residues N232, 261–266 (GYGDVG), E284, N319, 340–342 (IGH), and N388 each bind NAD(+).

It belongs to the adenosylhomocysteinase family. The cofactor is NAD(+).

It localises to the cytoplasm. It carries out the reaction S-adenosyl-L-homocysteine + H2O = L-homocysteine + adenosine. It participates in amino-acid biosynthesis; L-homocysteine biosynthesis; L-homocysteine from S-adenosyl-L-homocysteine: step 1/1. Functionally, may play a key role in the regulation of the intracellular concentration of adenosylhomocysteine. The protein is Adenosylhomocysteinase of Corynebacterium glutamicum (strain ATCC 13032 / DSM 20300 / JCM 1318 / BCRC 11384 / CCUG 27702 / LMG 3730 / NBRC 12168 / NCIMB 10025 / NRRL B-2784 / 534).